The sequence spans 224 residues: Putative ankyrin repeat protein R845 (224 aa).

8 ANK repeats span residues 1 to 14 (MVEYLVSLGADVRS), 15 to 44 (NYDHAIKSAFENGHLQVIKYLISLGSDVSM), 46 to 74 (YDYILLRASRNGYIDVVKYLIEQGVDPRT), 75 to 104 (NNDKAVRKASKNGRLEIVEYLVTLGADIRI), 105 to 134 (DNDSAVRWASKNGHIKTVEFLVAKGADIRA), 136 to 164 (NDYSLRHSSKHGHIKMVEYLVAQGADVRA), 165 to 194 (DNDYAIKWASGKGHLEVVKYLVEKGADFRA), and 196 to 224 (NDCAVKWASQTGRVEIVEYLVSKGAVCPY).

This chain is Putative ankyrin repeat protein R845, found in Acanthamoeba polyphaga mimivirus (APMV).